A 436-amino-acid polypeptide reads, in one-letter code: Sulfopropanediol 3-dehydrogenase (436 aa).

Positions 118, 180, and 203 each coordinate NAD(+). Zn(2+)-binding residues include Q248 and H251. Active-site proton acceptor residues include E318 and H319. The Zn(2+) site is built by D352 and H411.

This sequence belongs to the histidinol dehydrogenase family. HpsN subfamily. The cofactor is Zn(2+).

It catalyses the reaction (2R)-3-sulfopropanediol + 2 NAD(+) + H2O = (2R)-3-sulfolactate + 2 NADH + 3 H(+). Catalyzes the NAD-dependent oxidation of (R)-2,3-dihydroxypropane-1-sulfonate to (R)-3-sulfolactate. The chain is Sulfopropanediol 3-dehydrogenase from Cupriavidus pinatubonensis (strain JMP 134 / LMG 1197) (Cupriavidus necator (strain JMP 134)).